Here is a 636-residue protein sequence, read N- to C-terminus: 1-deoxy-D-xylulose-5-phosphate synthase (636 aa).

Residues histidine 84 and 125-127 each bind thiamine diphosphate; that span reads GHS. Aspartate 156 is a binding site for Mg(2+). Residues 157-158, asparagine 185, phenylalanine 292, and glutamate 375 each bind thiamine diphosphate; that span reads GA. Position 185 (asparagine 185) interacts with Mg(2+).

Belongs to the transketolase family. DXPS subfamily. In terms of assembly, homodimer. Mg(2+) is required as a cofactor. Requires thiamine diphosphate as cofactor.

It catalyses the reaction D-glyceraldehyde 3-phosphate + pyruvate + H(+) = 1-deoxy-D-xylulose 5-phosphate + CO2. It functions in the pathway metabolic intermediate biosynthesis; 1-deoxy-D-xylulose 5-phosphate biosynthesis; 1-deoxy-D-xylulose 5-phosphate from D-glyceraldehyde 3-phosphate and pyruvate: step 1/1. In terms of biological role, catalyzes the acyloin condensation reaction between C atoms 2 and 3 of pyruvate and glyceraldehyde 3-phosphate to yield 1-deoxy-D-xylulose-5-phosphate (DXP). The protein is 1-deoxy-D-xylulose-5-phosphate synthase of Cellvibrio japonicus (strain Ueda107) (Pseudomonas fluorescens subsp. cellulosa).